The chain runs to 1429 residues: Nitric oxide synthase 1 (1429 aa).

Residues 1-200 are interaction with NOSIP; that stretch reads MEEHTFGVQQ…LQDSGEQDEL (200 aa). The region spanning 17-99 is the PDZ domain; sequence SVRLFKRKVG…ETHVVLILRG (83 aa). Disordered regions lie at residues 114–174 and 271–298; these read DGTP…SVSQ and NNPY…SRCP. The interaction with DYNLL1/PIN stretch occupies residues 163-240; sequence QGRGQGAGSV…TGIQVDRDLD (78 aa). The segment covering 272-294 has biased composition (polar residues); sequence NPYSENEQSPASGKQSPTKNGSP. Ser280 is modified (phosphoserine). Ser334 is a (6R)-L-erythro-5,6,7,8-tetrahydrobiopterin binding site. Heme b is bound at residue Cys415. 4 residues coordinate L-arginine: Gln478, Trp587, Tyr588, and Glu592. The (6R)-L-erythro-5,6,7,8-tetrahydrobiopterin site is built by Val677, Trp678, and Phe691. Tyr706 is a binding site for heme b. The segment at 725–745 is calmodulin-binding; the sequence is KRRAIGFKKLAEAVKFSAKLM. One can recognise a Flavodoxin-like domain in the interval 755–935; it reads ATILYATETG…AFRTWAKKVF (181 aa). The FMN site is built by Thr761, Glu762, Thr763, Lys765, Ser766, Ser807, Thr808, and Gly812. 3 positions are modified to phosphoserine: Ser847, Ser857, and Ser858. FMN is bound by residues Ser886, His891, Cys893, Glu919, and Gln923. The 248-residue stretch at 990 to 1237 folds into the FAD-binding FR-type domain; the sequence is KRVSAARLLS…VRGAPSFHLP (248 aa). Arg1010 provides a ligand contact to NADP(+). Positions 1032, 1173, 1174, 1175, 1176, 1191, and 1193 each coordinate FAD. Ser1196 is a binding site for NADP(+). FAD contacts are provided by Tyr1197, Val1210, Cys1211, and Ser1212. 10 residues coordinate NADP(+): Thr1251, Arg1284, Ser1313, Arg1314, Lys1320, Tyr1322, Gln1324, Asp1357, Thr1398, and Arg1400.

It belongs to the NOS family. Homodimer. Interacts with DLG4; the interaction possibly being prevented by the association between NOS1 and CAPON. Forms a ternary complex with CAPON and RASD1. Forms a ternary complex with CAPON and SYN1. Interacts with ZDHHC23. Interacts with NOSIP; which may impair its synaptic location. Interacts with HTR4. Interacts with VAC14. Interacts (via N-terminal domain) with DLG4 (via N-terminal tandem pair of PDZ domains). Interacts with SLC6A4. Forms a complex with ASL, ASS1 and SLC7A1; the complex regulates cell-autonomous L-arginine synthesis and citrulline recycling while channeling extracellular L-arginine to nitric oxide synthesis pathway. Interacts with DMD; localizes NOS1 to sarcolemma in muscle cells. Interacts with DYNLL1; inhibits the nitric oxide synthase activity. Heme b is required as a cofactor. It depends on FAD as a cofactor. Requires FMN as cofactor. (6R)-L-erythro-5,6,7,8-tetrahydrobiopterin serves as cofactor. In terms of processing, ubiquitinated; mediated by STUB1/CHIP in the presence of Hsp70 and Hsp40 (in vitro). As to expression, widely expressed in the nervous system: expressed in cerebrum, olfactory bulb, hippocampus, midbrain, cerebellum, pons, medulla oblongata, and spinal cord. Also found in skeletal muscle, where it is localized beneath the sarcolemma of fast twitch muscle fibers, and in spleen, heart, kidney, and liver. N-NOS-1 and N-NOS-2 are found in all parts of the nervous system. NNOS beta and gamma occur in a region-specific manner in the brain and NNOS beta expression is developmentally regulated. NNOS Mu is only found in mature skeletal and cardiac muscles.

It is found in the cell membrane. The protein resides in the sarcolemma. The protein localises to the cell projection. It localises to the dendritic spine. The enzyme catalyses 2 L-arginine + 3 NADPH + 4 O2 + H(+) = 2 L-citrulline + 2 nitric oxide + 3 NADP(+) + 4 H2O. Its activity is regulated as follows. Stimulated by calcium/calmodulin. Inhibited by DYNLL1 that prevents the dimerization of the protein. Inhibited by NOSIP. Functionally, produces nitric oxide (NO) which is a messenger molecule with diverse functions throughout the body. In the brain and peripheral nervous system, NO displays many properties of a neurotransmitter. Probably has nitrosylase activity and mediates cysteine S-nitrosylation of cytoplasmic target proteins such SRR. Isoform NNOS Mu may be an effector enzyme for the dystrophin complex. This Mus musculus (Mouse) protein is Nitric oxide synthase 1.